A 362-amino-acid chain; its full sequence is MTDMPTLDAIRQAPKALLHDHLDGGLRPETVLDIAGQVGYDGLPSTDAGELASWFRTQSHSGSLERYLEPFSHTVAVMQTPEALYRVAYECVEDLAADAVVYAEIRFAPELHINRGLTFDEIVDAVLAGFAAGERACAGAGCPIKVRLLVTAMRHAAMSREIAELAIRFRDKGVVGFDIAGAEAGYPPSRHLDAFEYMRDNNARFTIHAGEAFGLPSIHEAIAFCGADRLGHGVRIVDDIEVGLDGDVKLGRLAAILRDKRIPLELCPSSNVQTGAVASIAEHPFDLLARSRFRVTVNTDNRLMSDTSMSQEMYRLVETFGYGWSDIQRFTINAMKSAFIAFDERLEIIDEVIKPRFAVLIG.

Residues His19 and His21 each coordinate Zn(2+). His21, Asp23, and Gly181 together coordinate substrate. Position 208 (His208) interacts with Zn(2+). The Proton donor role is filled by Glu211. Zn(2+) is bound at residue Asp300.

The protein belongs to the metallo-dependent hydrolases superfamily. Adenosine and AMP deaminases family. Adenosine deaminase subfamily. The cofactor is Zn(2+).

It carries out the reaction adenosine + H2O + H(+) = inosine + NH4(+). It catalyses the reaction 2'-deoxyadenosine + H2O + H(+) = 2'-deoxyinosine + NH4(+). Its function is as follows. Catalyzes the hydrolytic deamination of adenosine and 2-deoxyadenosine. The sequence is that of Adenosine deaminase from Mycobacterium ulcerans (strain Agy99).